A 671-amino-acid polypeptide reads, in one-letter code: DNA ligase (671 aa).

Residues 38 to 42, 87 to 88, and Glu113 contribute to the NAD(+) site; these read DKEFD and SL. Lys115 acts as the N6-AMP-lysine intermediate in catalysis. NAD(+) contacts are provided by Arg136, Glu170, Lys282, and Lys306. Zn(2+)-binding residues include Cys396, Cys399, Cys414, and Cys419. The region spanning 586–671 is the BRCT domain; that stretch reads SDLQPFVGQS…LLKQEGIAID (86 aa).

Belongs to the NAD-dependent DNA ligase family. LigA subfamily. Requires Mg(2+) as cofactor. Mn(2+) serves as cofactor.

It catalyses the reaction NAD(+) + (deoxyribonucleotide)n-3'-hydroxyl + 5'-phospho-(deoxyribonucleotide)m = (deoxyribonucleotide)n+m + AMP + beta-nicotinamide D-nucleotide.. In terms of biological role, DNA ligase that catalyzes the formation of phosphodiester linkages between 5'-phosphoryl and 3'-hydroxyl groups in double-stranded DNA using NAD as a coenzyme and as the energy source for the reaction. It is essential for DNA replication and repair of damaged DNA. This chain is DNA ligase, found in Leptospira biflexa serovar Patoc (strain Patoc 1 / Ames).